Consider the following 332-residue polypeptide: Malate dehydrogenase (332 aa).

NAD(+)-binding positions include 11–16 (GAGNVG) and Asp35. Positions 97 and 103 each coordinate substrate. NAD(+) contacts are provided by residues Asn110 and 133 to 135 (VTN). Substrate-binding residues include Asn135 and Arg166. His190 acts as the Proton acceptor in catalysis.

The protein belongs to the LDH/MDH superfamily. MDH type 3 family.

The enzyme catalyses (S)-malate + NAD(+) = oxaloacetate + NADH + H(+). Its function is as follows. Catalyzes the reversible oxidation of malate to oxaloacetate. The protein is Malate dehydrogenase of Hydrogenobaculum sp. (strain Y04AAS1).